The primary structure comprises 323 residues: MIKVSAPGKILWIGSYSVVFGGISHVIAVNKRVSCSLREIKEKDSLIFHTSYGHFKNSGNELINSVLDTFRERLSQLPQGYEIDLYNDKEFIIDGKKTGLGSSSAATVSLTACLYYAIHGKLDLFEIHKLAQIANYKRQKGIGSGFDIASAVFGSIVYKRFTDLDKMDFYFEKLNLGNYDMMLGFTGKSSETVGLVRKFVEKSNLDDFKEIMRLIDEENYMAIKLIKLNKLDEAVEHIKLGRKYLNYIAERIVGVKLVSKMEEELIKIAEEEGALVALSPGAGGGDSIFALGNDLNRVREAWSKRGIFIIDVKEDEGLRLESN.

The protein belongs to the GHMP kinase family. As to quaternary structure, homodimer. It depends on Mg(2+) as a cofactor.

It carries out the reaction (R)-5-phosphomevalonate + ATP = (R)-5-diphosphomevalonate + ADP. It functions in the pathway isoprenoid biosynthesis; isopentenyl diphosphate biosynthesis via mevalonate pathway; isopentenyl diphosphate from (R)-mevalonate: step 2/3. Its function is as follows. Catalyzes the phosphorylation of (R)-mevalonate 5-phosphate (MVAP) to (R)-mevalonate 5-diphosphate (MVAPP). Functions in the mevalonate (MVA) pathway leading to isopentenyl diphosphate (IPP), a key precursor for the biosynthesis of isoprenoid compounds such as archaeal membrane lipids. The sequence is that of Phosphomevalonate kinase from Saccharolobus solfataricus (strain ATCC 35092 / DSM 1617 / JCM 11322 / P2) (Sulfolobus solfataricus).